Here is a 277-residue protein sequence, read N- to C-terminus: Undecaprenyl-diphosphatase (277 aa).

Helical transmembrane passes span 88 to 108, 117 to 137, 157 to 179, 191 to 211, 227 to 247, and 255 to 275; these read MGWL…LFQD, MWIV…ADAV, FAQA…AGLL, SFLL…YKVV, LATV…LKFV, and FVWY…FGVI.

The protein belongs to the UppP family.

Its subcellular location is the cell membrane. The enzyme catalyses di-trans,octa-cis-undecaprenyl diphosphate + H2O = di-trans,octa-cis-undecaprenyl phosphate + phosphate + H(+). Its function is as follows. Catalyzes the dephosphorylation of undecaprenyl diphosphate (UPP). Confers resistance to bacitracin. In Pseudarthrobacter chlorophenolicus (strain ATCC 700700 / DSM 12829 / CIP 107037 / JCM 12360 / KCTC 9906 / NCIMB 13794 / A6) (Arthrobacter chlorophenolicus), this protein is Undecaprenyl-diphosphatase.